A 773-amino-acid polypeptide reads, in one-letter code: Pentatricopeptide repeat-containing protein At1g76280 (773 aa).

PPR repeat units follow at residues 130 to 165, 166 to 200, 201 to 231, 235 to 269, 332 to 369, 370 to 400, 402 to 436, 524 to 558, 559 to 593, 594 to 628, and 629 to 663; these read DSRS…RISP, LLPI…RVGK, NGIT…YVNH, DILS…ALRG, LRWS…NLKP, YDST…ISEC, YSYP…KLRP, GTPT…GCPA, DVAT…GFSP, KAVT…EIHL, and DVLS…KVNP.

Belongs to the PPR family. P subfamily.

This Arabidopsis thaliana (Mouse-ear cress) protein is Pentatricopeptide repeat-containing protein At1g76280.